The following is a 202-amino-acid chain: Probable nicotinate-nucleotide adenylyltransferase (202 aa).

It belongs to the NadD family.

The catalysed reaction is nicotinate beta-D-ribonucleotide + ATP + H(+) = deamido-NAD(+) + diphosphate. The protein operates within cofactor biosynthesis; NAD(+) biosynthesis; deamido-NAD(+) from nicotinate D-ribonucleotide: step 1/1. Functionally, catalyzes the reversible adenylation of nicotinate mononucleotide (NaMN) to nicotinic acid adenine dinucleotide (NaAD). In Clostridium perfringens (strain SM101 / Type A), this protein is Probable nicotinate-nucleotide adenylyltransferase.